Reading from the N-terminus, the 159-residue chain is Cytochrome c-type biogenesis protein CcmE (159 aa).

Residues 1-8 lie on the Cytoplasmic side of the membrane; that stretch reads MNIRRKNR. Residues 9 to 29 form a helical; Signal-anchor for type II membrane protein membrane-spanning segment; sequence LWIACAVLAGLALTITLVLYA. Residues 30 to 159 are Periplasmic-facing; sequence LRSNIDLFYT…PESVYKDKAS (130 aa). Heme is bound by residues His-130 and Tyr-134. The interval 130–159 is disordered; that stretch reads HDENYTPPEVEKAMQENHRRPESVYKDKAS.

Belongs to the CcmE/CycJ family.

Its subcellular location is the cell inner membrane. Functionally, heme chaperone required for the biogenesis of c-type cytochromes. Transiently binds heme delivered by CcmC and transfers the heme to apo-cytochromes in a process facilitated by CcmF and CcmH. The protein is Cytochrome c-type biogenesis protein CcmE of Citrobacter koseri (strain ATCC BAA-895 / CDC 4225-83 / SGSC4696).